A 632-amino-acid chain; its full sequence is tRNA 5-methylaminomethyl-2-thiouridine biosynthesis bifunctional protein MnmC (632 aa).

The tRNA (mnm(5)s(2)U34)-methyltransferase stretch occupies residues 1–247; the sequence is MNSRIFPAAM…KWHMTLGQRL (247 aa). Residues 267-632 form an FAD-dependent cmnm(5)s(2)U34 oxidoreductase region; sequence VGAGLAGAAV…TDLLAQIAPR (366 aa).

In the N-terminal section; belongs to the methyltransferase superfamily. tRNA (mnm(5)s(2)U34)-methyltransferase family. It in the C-terminal section; belongs to the DAO family. FAD is required as a cofactor.

It localises to the cytoplasm. The catalysed reaction is 5-aminomethyl-2-thiouridine(34) in tRNA + S-adenosyl-L-methionine = 5-methylaminomethyl-2-thiouridine(34) in tRNA + S-adenosyl-L-homocysteine + H(+). Its function is as follows. Catalyzes the last two steps in the biosynthesis of 5-methylaminomethyl-2-thiouridine (mnm(5)s(2)U) at the wobble position (U34) in tRNA. Catalyzes the FAD-dependent demodification of cmnm(5)s(2)U34 to nm(5)s(2)U34, followed by the transfer of a methyl group from S-adenosyl-L-methionine to nm(5)s(2)U34, to form mnm(5)s(2)U34. The protein is tRNA 5-methylaminomethyl-2-thiouridine biosynthesis bifunctional protein MnmC of Bordetella bronchiseptica (strain ATCC BAA-588 / NCTC 13252 / RB50) (Alcaligenes bronchisepticus).